The following is a 459-amino-acid chain: tRNA modification GTPase MnmE (459 aa).

(6S)-5-formyl-5,6,7,8-tetrahydrofolate is bound by residues R29, E91, and R130. Residues 225 to 381 (GVKVAIVGRP…LEEALEQLVT (157 aa)) form the TrmE-type G domain. N235 provides a ligand contact to K(+). Residues 235 to 240 (NVGKSS), 254 to 260 (TDLPGTT), and 279 to 282 (DTAG) each bind GTP. A Mg(2+)-binding site is contributed by S239. T254, L256, and T259 together coordinate K(+). Residue T260 participates in Mg(2+) binding. Residue K459 coordinates (6S)-5-formyl-5,6,7,8-tetrahydrofolate.

Belongs to the TRAFAC class TrmE-Era-EngA-EngB-Septin-like GTPase superfamily. TrmE GTPase family. In terms of assembly, homodimer. Heterotetramer of two MnmE and two MnmG subunits. K(+) serves as cofactor.

It is found in the cytoplasm. Its function is as follows. Exhibits a very high intrinsic GTPase hydrolysis rate. Involved in the addition of a carboxymethylaminomethyl (cmnm) group at the wobble position (U34) of certain tRNAs, forming tRNA-cmnm(5)s(2)U34. The polypeptide is tRNA modification GTPase MnmE (Synechococcus sp. (strain JA-3-3Ab) (Cyanobacteria bacterium Yellowstone A-Prime)).